Consider the following 948-residue polypeptide: Hexagonally packed intermediate-layer surface protein (948 aa).

An N-terminal signal peptide occupies residues 1 to 17; sequence MKKNIALMALTGILTLA. Disulfide bonds link cysteine 168/cysteine 187 and cysteine 554/cysteine 666.

Glycosylated. Contains tightly bound reducing sugars (six per polypeptide chain) and fatty acids (covalently bound and located in the N-terminal region).

The protein localises to the secreted. It is found in the cell wall. Its subcellular location is the S-layer. In terms of biological role, shape maintenance, possible protection from noxious enzymes or exogenous and unsettling DNA, and may mediate homotypic cell-cell contacts. This Deinococcus radiodurans (strain ATCC 13939 / DSM 20539 / JCM 16871 / CCUG 27074 / LMG 4051 / NBRC 15346 / NCIMB 9279 / VKM B-1422 / R1) protein is Hexagonally packed intermediate-layer surface protein (hpi).